Reading from the N-terminus, the 306-residue chain is Ribonuclease Z (306 aa).

Zn(2+) contacts are provided by histidine 63, histidine 65, aspartate 67, histidine 68, histidine 141, aspartate 208, and histidine 266. Catalysis depends on aspartate 67, which acts as the Proton acceptor.

The protein belongs to the RNase Z family. As to quaternary structure, homodimer. It depends on Zn(2+) as a cofactor.

The enzyme catalyses Endonucleolytic cleavage of RNA, removing extra 3' nucleotides from tRNA precursor, generating 3' termini of tRNAs. A 3'-hydroxy group is left at the tRNA terminus and a 5'-phosphoryl group is left at the trailer molecule.. In terms of biological role, zinc phosphodiesterase, which displays some tRNA 3'-processing endonuclease activity. Probably involved in tRNA maturation, by removing a 3'-trailer from precursor tRNA. This chain is Ribonuclease Z, found in Chlamydia abortus (strain DSM 27085 / S26/3) (Chlamydophila abortus).